The sequence spans 399 residues: Insertion element IS900 uncharacterized 42 kDa protein (399 aa).

It belongs to the transposase IS1111A/IS1328/IS1533 family.

The protein is Insertion element IS900 uncharacterized 42 kDa protein of Mycobacterium paratuberculosis.